The chain runs to 512 residues: MAFLDYPPFDICTIQQLLTFIIISYTFYLTTRSIWRLYFHPLSKYPGPKVAAISDIWYAYHALAGRWPWAVADALEKYGDVVRIAPNEIAFVTPKALSDIYGSHNKNLENFAKTQINNHGNDEHGGLIWEWDPARHREVARQLSPAFSGRALRAKEATLHKYIDLFVERMTTLGGETGGVSLPTWINWLCVDISADMAYNREMNALKDMKEPPYLSILSGFNRAVVVTQMSWRFPLLSPLKGLFLAITAMRSHSHIRNHSRFQLEQRIRRKGAVEHLDFFEQLIPENREPPKDRKEMRHLEQVAGQLLVAGYEPPALWFYFTIYYLLKNPATLDTLTKEIRSAFKNYDEITSGSAAQLAYLSACLSESLRIMPGVLTGMPVVSPGAMVDGTYIPKGVVCQSSSLALARSPRNFRHALSFRPERWLQEDHALYDAQFAQDNRKGFQPFSQGPRICAGKEIAWWQSRVFLAKVLWTFDLEMVSGQQIDMARDLRGWGMYDKPEIRVRFRPKFVV.

A heme-binding site is contributed by C454.

Belongs to the cytochrome P450 family. The cofactor is heme.

The protein operates within secondary metabolite biosynthesis. In terms of biological role, cytochrome P450 monooxygenase; part of the gene cluster that mediates the biosynthesis of wortmanamides A and B, reduced long-chain polyketides amidated with a specific omega-amino acid, 5-aminopentanoic acid (5PA). The PKS modules of TwmB are involved in the synthesis of the polyketide backbone, whereas the non-canonical C domain of TwmB is a bonafide condensation domain that specifically selects 5PA and catalyzes amidation to release polyketide chain. The C domain clearly prefers C16 and C18 fatty acyl substrates, which is consistent with simultaneous formation of both octaketide and nonaketide acyl amides wortmanamides A and B. Because TwmB lacks a designated enoylreductase (ER) domain, the required activity is provided the enoyl reductase TwmE. The roles of the remaining enzymes have still to be clarified. This is Cytochrome P450 monooxygenase TwmD from Talaromyces wortmannii (Penicillium wortmannii).